Here is a 124-residue protein sequence, read N- to C-terminus: Small ribosomal subunit protein uS12c (124 aa).

2 disordered regions span residues 1–28 (MPTIQQLVRSERRKIHKKTKSPALQSCP) and 104–124 (AAGVKDRRKSRSKYGTKKPKS). 2 stretches are compositionally biased toward basic residues: residues 11–20 (ERRKIHKKTK) and 109–124 (DRRKSRSKYGTKKPKS).

The protein belongs to the universal ribosomal protein uS12 family. As to quaternary structure, part of the 30S ribosomal subunit.

It is found in the plastid. The protein localises to the chloroplast. With S4 and S5 plays an important role in translational accuracy. Located at the interface of the 30S and 50S subunits. The chain is Small ribosomal subunit protein uS12c (rps12) from Pyropia yezoensis (Susabi-nori).